The primary structure comprises 444 residues: C4-dicarboxylate transport protein 3 (444 aa).

9 consecutive transmembrane segments (helical) span residues valine 22–proline 42, leucine 60–isoleucine 80, valine 95–valine 115, glycine 162–glycine 182, alanine 198–methionine 218, leucine 236–alanine 256, isoleucine 321–glycine 341, isoleucine 346–isoleucine 366, and leucine 399–leucine 419.

This sequence belongs to the dicarboxylate/amino acid:cation symporter (DAACS) (TC 2.A.23) family.

Its subcellular location is the cell inner membrane. Functionally, responsible for the transport of dicarboxylates such as succinate, fumarate, and malate from the periplasm across the membrane. This is C4-dicarboxylate transport protein 3 from Bradyrhizobium diazoefficiens (strain JCM 10833 / BCRC 13528 / IAM 13628 / NBRC 14792 / USDA 110).